The following is a 618-amino-acid chain: Proline--tRNA ligase (618 aa).

Belongs to the class-II aminoacyl-tRNA synthetase family. ProS type 1 subfamily. In terms of assembly, homodimer.

The protein localises to the cytoplasm. The enzyme catalyses tRNA(Pro) + L-proline + ATP = L-prolyl-tRNA(Pro) + AMP + diphosphate. Functionally, catalyzes the attachment of proline to tRNA(Pro) in a two-step reaction: proline is first activated by ATP to form Pro-AMP and then transferred to the acceptor end of tRNA(Pro). As ProRS can inadvertently accommodate and process non-cognate amino acids such as alanine and cysteine, to avoid such errors it has two additional distinct editing activities against alanine. One activity is designated as 'pretransfer' editing and involves the tRNA(Pro)-independent hydrolysis of activated Ala-AMP. The other activity is designated 'posttransfer' editing and involves deacylation of mischarged Ala-tRNA(Pro). The misacylated Cys-tRNA(Pro) is not edited by ProRS. The sequence is that of Proline--tRNA ligase from Streptococcus uberis (strain ATCC BAA-854 / 0140J).